The primary structure comprises 466 residues: MPQTLSASDMVTPGSLSPPPTEPTDGEQAGQPLLDGAPSSASLETLIQHLVPTADYYPEKAYIFTFLLSSRLFIEPRELLARVCHLCIEQQQLDKPVLDKARVRKFGPKLLQLLAEWTETFPRDFQEESTIGHLKDVVGRIAPCDEAYRKRMHQLLQALHQKLAALRQGPEGLVGADKPISYRTKPPASIHRELLGVCSDPYTLAQQLTHVELERLRHIGPEEFVQAFVNKDPLASTKPCFSDKTSNLEAYVKWFNRLCYLVATEICMPAKKKQRAQVIEFFIDVARECFNIGNFNSLMAIISGMNMSPVSRLKKTWAKVRTAKFFILEHQMDPTGNFCNYRTALRGAAHRSLTAHSSREKIVIPFFSLLIKDIYFLNEGCANRLPNGHVNFEKFLELAKQVGEFITWKQVECPFEQDASITHYLYTAPIFSEDGLYLASYESESPENQTEKERWKALRSSILGKT.

The segment at 1-37 (MPQTLSASDMVTPGSLSPPPTEPTDGEQAGQPLLDGA) is disordered. The 131-residue stretch at 34-164 (LDGAPSSASL…LLQALHQKLA (131 aa)) folds into the N-terminal Ras-GEF domain. The region spanning 200-446 (DPYTLAQQLT…YLASYESESP (247 aa)) is the Ras-GEF domain.

In terms of biological role, guanine nucleotide exchange factor (GEF). This chain is Ras-GEF domain-containing family member 1C (RASGEF1C), found in Homo sapiens (Human).